Reading from the N-terminus, the 324-residue chain is Glycerol-3-phosphate dehydrogenase [NAD(P)+] (324 aa).

Phenylalanine 11, arginine 31, and lysine 107 together coordinate NADPH. Lysine 107 and glycine 135 together coordinate sn-glycerol 3-phosphate. Position 139 (alanine 139) interacts with NADPH. Positions 190, 245, 255, 256, and 257 each coordinate sn-glycerol 3-phosphate. Lysine 190 acts as the Proton acceptor in catalysis. Arginine 256 serves as a coordination point for NADPH. Valine 278 and glutamate 279 together coordinate NADPH.

Belongs to the NAD-dependent glycerol-3-phosphate dehydrogenase family.

It is found in the cytoplasm. It carries out the reaction sn-glycerol 3-phosphate + NAD(+) = dihydroxyacetone phosphate + NADH + H(+). The catalysed reaction is sn-glycerol 3-phosphate + NADP(+) = dihydroxyacetone phosphate + NADPH + H(+). Its pathway is membrane lipid metabolism; glycerophospholipid metabolism. Functionally, catalyzes the reduction of the glycolytic intermediate dihydroxyacetone phosphate (DHAP) to sn-glycerol 3-phosphate (G3P), the key precursor for phospholipid synthesis. The chain is Glycerol-3-phosphate dehydrogenase [NAD(P)+] from Anaplasma phagocytophilum (strain HZ).